The following is a 314-amino-acid chain: Aspartate carbamoyltransferase catalytic subunit (314 aa).

The carbamoyl phosphate site is built by Arg55 and Thr56. Lys83 contacts L-aspartate. Arg105, His134, and Gln137 together coordinate carbamoyl phosphate. Arg167 and Arg221 together coordinate L-aspartate. Gly262 and Pro263 together coordinate carbamoyl phosphate.

It belongs to the aspartate/ornithine carbamoyltransferase superfamily. ATCase family. In terms of assembly, heterododecamer (2C3:3R2) of six catalytic PyrB chains organized as two trimers (C3), and six regulatory PyrI chains organized as three dimers (R2).

It carries out the reaction carbamoyl phosphate + L-aspartate = N-carbamoyl-L-aspartate + phosphate + H(+). The protein operates within pyrimidine metabolism; UMP biosynthesis via de novo pathway; (S)-dihydroorotate from bicarbonate: step 2/3. Functionally, catalyzes the condensation of carbamoyl phosphate and aspartate to form carbamoyl aspartate and inorganic phosphate, the committed step in the de novo pyrimidine nucleotide biosynthesis pathway. In Corynebacterium urealyticum (strain ATCC 43042 / DSM 7109), this protein is Aspartate carbamoyltransferase catalytic subunit.